The following is a 239-amino-acid chain: Ribosomal RNA small subunit methyltransferase G (239 aa).

S-adenosyl-L-methionine is bound by residues glycine 77, phenylalanine 82, 128–129 (AE), and arginine 147.

This sequence belongs to the methyltransferase superfamily. RNA methyltransferase RsmG family.

It localises to the cytoplasm. Specifically methylates the N7 position of guanine in position 535 of 16S rRNA. This Bacillus cereus (strain ZK / E33L) protein is Ribosomal RNA small subunit methyltransferase G.